We begin with the raw amino-acid sequence, 504 residues long: Acetyltransferase pyiB (504 aa).

The signal sequence occupies residues 1–18; the sequence is MGFLSAGGLWASLFRARI. A glycan (N-linked (GlcNAc...) asparagine) is linked at asparagine 84. The Proton acceptor role is filled by histidine 181. Asparagine 413 and asparagine 467 each carry an N-linked (GlcNAc...) asparagine glycan.

It belongs to the plant acyltransferase family.

Its pathway is mycotoxin biosynthesis. Acetyltransferase; part of the gene cluster that mediates the biosynthesis of the mycotoxin pyrichalasin H, a tyrosine-derived cytochalasan that inhibits the growth of rice seedlings, but also inhibits lymphocyte capping and actin polymerization and alters cell morphology. Pyrichalasin H is indicated as the responsible agent for the genus-specific pathogenicity of M.grisea toward crabgrass. The first step in the pathway is catalyzed by the O-methyltransferase pyiA which methylates free tyrosine to generate the precursor O-methyltyrosine. The hybrid PKS-NRPS pyiS, assisted by the enoyl reductase pyiC, are responsible for fusion of the O-methyltyrosine precursor and the polyketide backbone. The polyketide synthase module (PKS) of pyiS is responsible for the synthesis of the polyketide backbone and the downstream nonribosomal peptide synthetase (NRPS) amidates the carboxyl end of the polyketide with the O-methyltyrosine precursor. As the NRPS A-domain demonstrates substrate tolerance, pyiS can also use phenylalanine, tyrosine and even para-chlorophenylalanine as amino acid precursor, which leads to the production of novel cytochalasans, including halogenated cytochalasans. Because pyiS lacks a designated enoylreductase (ER) domain, the required activity is provided the enoyl reductase pyiC. Reduction by the hydrolyase pyiE leads to 1,5-dihydropyrrolone, which is substrate for dehydration and intra-molecular Diels-Alder cyclization by the Diels-Alderase pyiF to yield the required isoindolone-fused macrocycle. The tailoring cytochrome P450 monooxygenases piyD and piyG catalyze the hydroxylation at C-18 and C-7, respectivily, whereas the short-chain dehydrogenase/reductase pyiH reduces the carbonyl at C-21 in preparation for the transfer of an acetyl group by the acetyltransferase pyiB. These 3 reactions whose order is not clear yet, lead to the production of O-methylpyrichalasin J, a deacetylated pyrichalasin H. Finally, pyiB to converts O-methylpyrichalasin J into the final product pyrichalasin H via acetylation of C-21. This Pyricularia grisea (Crabgrass-specific blast fungus) protein is Acetyltransferase pyiB.